Reading from the N-terminus, the 163-residue chain is Lipoprotein signal peptidase (163 aa).

Transmembrane regions (helical) follow at residues 4 to 24, 66 to 86, and 92 to 112; these read SAAL…LLIL, LDAW…AWLW, and DHQF…GNII. Residues Asp-122 and Asp-140 contribute to the active site. The chain crosses the membrane as a helical span at residues 132–152; that stretch reads SFAVFNLADSLITIGAGFILL.

Belongs to the peptidase A8 family.

The protein resides in the cell inner membrane. The catalysed reaction is Release of signal peptides from bacterial membrane prolipoproteins. Hydrolyzes -Xaa-Yaa-Zaa-|-(S,diacylglyceryl)Cys-, in which Xaa is hydrophobic (preferably Leu), and Yaa (Ala or Ser) and Zaa (Gly or Ala) have small, neutral side chains.. It functions in the pathway protein modification; lipoprotein biosynthesis (signal peptide cleavage). Functionally, this protein specifically catalyzes the removal of signal peptides from prolipoproteins. This Allorhizobium ampelinum (strain ATCC BAA-846 / DSM 112012 / S4) (Agrobacterium vitis (strain S4)) protein is Lipoprotein signal peptidase.